The sequence spans 410 residues: Arginine biosynthesis bifunctional protein ArgJ (410 aa).

Residues threonine 160, lysine 186, threonine 197, glutamate 283, asparagine 405, and threonine 410 each coordinate substrate. Threonine 197 (nucleophile) is an active-site residue.

This sequence belongs to the ArgJ family. In terms of assembly, heterotetramer of two alpha and two beta chains.

Its subcellular location is the cytoplasm. The enzyme catalyses N(2)-acetyl-L-ornithine + L-glutamate = N-acetyl-L-glutamate + L-ornithine. It catalyses the reaction L-glutamate + acetyl-CoA = N-acetyl-L-glutamate + CoA + H(+). It participates in amino-acid biosynthesis; L-arginine biosynthesis; L-ornithine and N-acetyl-L-glutamate from L-glutamate and N(2)-acetyl-L-ornithine (cyclic): step 1/1. It functions in the pathway amino-acid biosynthesis; L-arginine biosynthesis; N(2)-acetyl-L-ornithine from L-glutamate: step 1/4. In terms of biological role, catalyzes two activities which are involved in the cyclic version of arginine biosynthesis: the synthesis of N-acetylglutamate from glutamate and acetyl-CoA as the acetyl donor, and of ornithine by transacetylation between N(2)-acetylornithine and glutamate. This is Arginine biosynthesis bifunctional protein ArgJ from Geobacillus kaustophilus (strain HTA426).